A 769-amino-acid chain; its full sequence is Disintegrin and metalloproteinase domain-containing protein 11 (769 aa).

The first 23 residues, 1–23 (MRLLRRWAFAALLLSLLPTPGLG), serve as a signal peptide directing secretion. A propeptide spanning residues 24-225 (TQGPAGALRW…PNRPRLRRKR (202 aa)) is cleaved from the precursor. The disordered stretch occupies residues 40 to 78 (GGPGAPEVTEPSRLVRESSGGEVRKQQLDTRVRQEPPGG). Over residues 61 to 73 (EVRKQQLDTRVRQ) the composition is skewed to basic and acidic residues. Residues asparagine 96 and asparagine 163 are each glycosylated (N-linked (GlcNAc...) asparagine). The Extracellular portion of the chain corresponds to 226–734 (QVRRGHPTVH…ERYKGPSGTN (509 aa)). One can recognise a Peptidase M12B domain in the interval 239–438 (KYVELIVIND…GGGSCLFNKP (200 aa)). The tract at residues 332 to 769 (GRTFQSTSSG…NIRRGRSGGA (438 aa)) is required for localization to cerebellar cortex basket cell terminals. Also required for localization of KCNA1, KCNA2, DLG4 and ADAM22 to cerebellar cortex basket cell terminal perisomatic axons and pinceaux. Cystine bridges form between cysteine 349-cysteine 433, cysteine 392-cysteine 417, cysteine 394-cysteine 401, and cysteine 503-cysteine 523. The Disintegrin domain occupies 444-531 (PPECGNGFVE…QCPPNLHKLD (88 aa)). 2 N-linked (GlcNAc...) asparagine glycosylation sites follow: asparagine 605 and asparagine 673. 3 disulfide bridges follow: cysteine 677/cysteine 692, cysteine 686/cysteine 698, and cysteine 700/cysteine 709. In terms of domain architecture, EGF-like spans 677-709 (CPGSGERRICSHHGVCSNEGKCICQPDWTGKDC). The helical transmembrane segment at 735–755 (IIIGSIAGAVLVAAIVLGGTG) threads the bilayer. The Cytoplasmic segment spans residues 756–769 (WGFKNIRRGRSGGA).

As to quaternary structure, interacts with LGI1 and LGI4. Interacts with KCNA1/KV1.1, KCNA2/KV1.2, DLG4/PSD-95 and ADAM22. In terms of processing, the precursor is cleaved by a furin endopeptidase. As to expression, expressed predominantly in brain. Slightly detected or not at all in other tissues.

Its subcellular location is the presynaptic cell membrane. The protein resides in the perikaryon. It localises to the cell projection. The protein localises to the axon. Probable ligand for integrin in the brain. This is a non catalytic metalloprotease-like protein. Required for localization of the potassium channel subunit proteins KCNA1/KV1.1 and KCNA2/KV1.2 at cerebellar cortex basket cell distal terminals, is thereby involved in ephaptic inhibitory synchronization of Purkinje cell firing and response to stress. Plays a role in spatial learning and motor coordination. Involved in the nociceptive pain response to chemical-derived stimulation. This chain is Disintegrin and metalloproteinase domain-containing protein 11 (ADAM11), found in Homo sapiens (Human).